The primary structure comprises 204 residues: Peptidyl-tRNA hydrolase (204 aa).

Y14 lines the tRNA pocket. H19 serves as the catalytic Proton acceptor. Residues Y64, N66, and N112 each coordinate tRNA.

Belongs to the PTH family. In terms of assembly, monomer.

It is found in the cytoplasm. The catalysed reaction is an N-acyl-L-alpha-aminoacyl-tRNA + H2O = an N-acyl-L-amino acid + a tRNA + H(+). Hydrolyzes ribosome-free peptidyl-tRNAs (with 1 or more amino acids incorporated), which drop off the ribosome during protein synthesis, or as a result of ribosome stalling. Its function is as follows. Catalyzes the release of premature peptidyl moieties from peptidyl-tRNA molecules trapped in stalled 50S ribosomal subunits, and thus maintains levels of free tRNAs and 50S ribosomes. The chain is Peptidyl-tRNA hydrolase from Nitrobacter hamburgensis (strain DSM 10229 / NCIMB 13809 / X14).